The chain runs to 798 residues: Galactinol--sucrose galactosyltransferase (798 aa).

Belongs to the glycosyl hydrolases 36 family.

It carries out the reaction alpha-D-galactosyl-(1-&gt;3)-1D-myo-inositol + sucrose = raffinose + myo-inositol. Inhibited by 1-deoxygalactonojirimycin. Not inhibited by stachyose. Strong inhibition of the hydrolytic activity by sucrose. In terms of biological role, transglycosidase operating by a ping-pong reaction mechanism. Involved in the synthesis of raffinose, a major soluble carbohydrate in seeds, roots and tubers. Able to utilize D-ononitol and D-pinitol as acceptors. May also act as a glycoside hydrolase. The protein is Galactinol--sucrose galactosyltransferase (RFS) of Pisum sativum (Garden pea).